A 1412-amino-acid polypeptide reads, in one-letter code: DNA-directed RNA polymerase subunit beta' (1412 aa).

Zn(2+) contacts are provided by C70, C72, C85, and C88. D460, D462, and D464 together coordinate Mg(2+). C819, C893, C900, and C903 together coordinate Zn(2+). The disordered stretch occupies residues 1393–1412 (EAFEFGTPSAPAEEPQHPAE).

The protein belongs to the RNA polymerase beta' chain family. As to quaternary structure, the RNAP catalytic core consists of 2 alpha, 1 beta, 1 beta' and 1 omega subunit. When a sigma factor is associated with the core the holoenzyme is formed, which can initiate transcription. It depends on Mg(2+) as a cofactor. Zn(2+) serves as cofactor.

The enzyme catalyses RNA(n) + a ribonucleoside 5'-triphosphate = RNA(n+1) + diphosphate. DNA-dependent RNA polymerase catalyzes the transcription of DNA into RNA using the four ribonucleoside triphosphates as substrates. This Burkholderia mallei (strain NCTC 10229) protein is DNA-directed RNA polymerase subunit beta'.